The following is a 101-amino-acid chain: Small ribosomal subunit protein uS10 (101 aa).

Belongs to the universal ribosomal protein uS10 family. In terms of assembly, part of the 30S ribosomal subunit.

In terms of biological role, involved in the binding of tRNA to the ribosomes. The protein is Small ribosomal subunit protein uS10 of Methanocaldococcus jannaschii (strain ATCC 43067 / DSM 2661 / JAL-1 / JCM 10045 / NBRC 100440) (Methanococcus jannaschii).